A 219-amino-acid polypeptide reads, in one-letter code: Deoxyribose-phosphate aldolase (219 aa).

Asp88 (proton donor/acceptor) is an active-site residue. Lys150 serves as the catalytic Schiff-base intermediate with acetaldehyde. Lys179 acts as the Proton donor/acceptor in catalysis.

Belongs to the DeoC/FbaB aldolase family. DeoC type 1 subfamily.

The protein resides in the cytoplasm. The enzyme catalyses 2-deoxy-D-ribose 5-phosphate = D-glyceraldehyde 3-phosphate + acetaldehyde. Its pathway is carbohydrate degradation; 2-deoxy-D-ribose 1-phosphate degradation; D-glyceraldehyde 3-phosphate and acetaldehyde from 2-deoxy-alpha-D-ribose 1-phosphate: step 2/2. Functionally, catalyzes a reversible aldol reaction between acetaldehyde and D-glyceraldehyde 3-phosphate to generate 2-deoxy-D-ribose 5-phosphate. The polypeptide is Deoxyribose-phosphate aldolase (Aquifex aeolicus (strain VF5)).